Consider the following 739-residue polypeptide: Phosphoribosylformylglycinamidine synthase subunit PurL (739 aa).

His54 is a catalytic residue. ATP contacts are provided by Tyr57 and Lys96. Glu98 serves as a coordination point for Mg(2+). Residues 99 to 102 (SHNH) and Arg121 contribute to the substrate site. His100 serves as the catalytic Proton acceptor. Asp122 provides a ligand contact to Mg(2+). Substrate is bound at residue Gln245. Position 273 (Asp273) interacts with Mg(2+). 317 to 319 (ESQ) is a substrate binding site. The ATP site is built by Asp500 and Gly537. Mg(2+) is bound at residue Asn538. Ser540 provides a ligand contact to substrate.

This sequence belongs to the FGAMS family. Monomer. Part of the FGAM synthase complex composed of 1 PurL, 1 PurQ and 2 PurS subunits.

The protein localises to the cytoplasm. The enzyme catalyses N(2)-formyl-N(1)-(5-phospho-beta-D-ribosyl)glycinamide + L-glutamine + ATP + H2O = 2-formamido-N(1)-(5-O-phospho-beta-D-ribosyl)acetamidine + L-glutamate + ADP + phosphate + H(+). Its pathway is purine metabolism; IMP biosynthesis via de novo pathway; 5-amino-1-(5-phospho-D-ribosyl)imidazole from N(2)-formyl-N(1)-(5-phospho-D-ribosyl)glycinamide: step 1/2. Functionally, part of the phosphoribosylformylglycinamidine synthase complex involved in the purines biosynthetic pathway. Catalyzes the ATP-dependent conversion of formylglycinamide ribonucleotide (FGAR) and glutamine to yield formylglycinamidine ribonucleotide (FGAM) and glutamate. The FGAM synthase complex is composed of three subunits. PurQ produces an ammonia molecule by converting glutamine to glutamate. PurL transfers the ammonia molecule to FGAR to form FGAM in an ATP-dependent manner. PurS interacts with PurQ and PurL and is thought to assist in the transfer of the ammonia molecule from PurQ to PurL. This is Phosphoribosylformylglycinamidine synthase subunit PurL from Bacillus cytotoxicus (strain DSM 22905 / CIP 110041 / 391-98 / NVH 391-98).